Consider the following 180-residue polypeptide: Chromatin structure-remodeling complex protein RSC14 (180 aa).

In terms of assembly, interacts with STH1, RSC3 and ARP9. Component of the two forms of the RSC complex composed of at least either RSC1 or RSC2, and ARP7, ARP9, LDB7, NPL6, RSC3, RSC30, RSC4, RSC58, RSC6, RSC8, RSC9, SFH1, STH1, HTL1 and probably RTT102. The complexes interact with histone and histone variant components of centromeric chromatin. Component of a fungal-specific module (HTL1-LDB7-NPL6-RSC3-RSC30) within the RSC complex.

The protein resides in the nucleus. In terms of biological role, component of the chromatin structure-remodeling complex (RSC), which is involved in transcription regulation and nucleosome positioning. RSC is responsible for the transfer of a histone octamer from a nucleosome core particle to naked DNA. The reaction requires ATP and involves an activated RSC-nucleosome intermediate. Remodeling reaction also involves DNA translocation, DNA twist and conformational change. As a reconfigurer of centromeric and flanking nucleosomes, RSC complex is required both for proper kinetochore function in chromosome segregation and, via a PKC1-dependent signaling pathway, for organization of the cellular cytoskeleton. Together with HTL1, NPL6, RSC3, RSC30 components, defines a fungal-specific module within the RSC complex that plays a role in many cellular functions including the maintenance of cell wall integrity. May be involved in the transfer of mannosylphosphate (MP) groups into N-linked oligosaccharides. This chain is Chromatin structure-remodeling complex protein RSC14 (LDB7), found in Saccharomyces cerevisiae (strain ATCC 204508 / S288c) (Baker's yeast).